Here is a 153-residue protein sequence, read N- to C-terminus: Ribonuclease H (153 aa).

One can recognise an RNase H type-1 domain in the interval 1 to 142; it reads MLKTIKIFSD…CDHLARESAK (142 aa). Positions 10, 48, 70, and 134 each coordinate Mg(2+).

The protein belongs to the RNase H family. In terms of assembly, monomer. The cofactor is Mg(2+).

Its subcellular location is the cytoplasm. It catalyses the reaction Endonucleolytic cleavage to 5'-phosphomonoester.. Its function is as follows. Endonuclease that specifically degrades the RNA of RNA-DNA hybrids. The protein is Ribonuclease H of Buchnera aphidicola subsp. Baizongia pistaciae (strain Bp).